The sequence spans 1173 residues: 3-hydroxy-3-methylglutaryl coenzyme A reductase mlcD (1173 aa).

Residues Asn143 and Asn186 are each glycosylated (N-linked (GlcNAc...) asparagine). Residues 241–420 (DVVVMVLGYI…FTFYTAILSI (180 aa)) form the SSD domain. 7 helical membrane passes run 242–262 (VVVM…LFLS), 272–292 (LATS…DVAI), 302–322 (LLSE…SITL), 368–388 (NIVC…VLGI), 397–417 (VLAA…YTAI), 479–499 (FWMV…TLFQ), and 594–614 (VLSK…SYLF). Positions 498–673 (FQASSSGSLS…FTPTTTDSDS (176 aa)) are linker. A compositionally biased stretch (polar residues) spans 647-666 (NQTPQIQSSLQAPQTRVFTP). A disordered region spans residues 647 to 669 (NQTPQIQSSLQAPQTRVFTPTTT). The tract at residues 674 to 1133 (DASLVLIKAS…LVKAHMAHNR (460 aa)) is catalytic. Glu822 acts as the Charge relay system in catalysis. N-linked (GlcNAc...) asparagine glycosylation is present at Asn886. Lys956 (charge relay system) is an active-site residue. Asn997 is a glycosylation site (N-linked (GlcNAc...) asparagine). Asp1032 serves as the catalytic Charge relay system. The Proton donor role is filled by His1128. Asn1132 is a glycosylation site (N-linked (GlcNAc...) asparagine). The disordered stretch occupies residues 1132-1173 (NRSAPASSAPSRSVSPSGGTRTVPVPNNALRPSAAATDRARR). Low complexity predominate over residues 1133–1148 (RSAPASSAPSRSVSPS).

It belongs to the HMG-CoA reductase family.

The protein resides in the endoplasmic reticulum membrane. It catalyses the reaction (R)-mevalonate + 2 NADP(+) + CoA = (3S)-3-hydroxy-3-methylglutaryl-CoA + 2 NADPH + 2 H(+). Its pathway is polyketide biosynthesis. In terms of biological role, HMG-CoA reductase; part of the gene cluster that mediates the biosynthesis of compactin, also known as mevastatin or ML-236B, and which acts as a potent competitive inhibitor of HMG-CoA reductase. Compactin biosynthesis is performed in two stages. The first stage is catalyzed by the nonaketide synthase mlcA, which belongs to type I polyketide synthases and catalyzes the iterative nine-step formation of the polyketide. This PKS stage is completed by the action of dehydrogenase mlcG, which catalyzes the NADPH-dependent reduction of the unsaturated tetra-, penta- and heptaketide intermediates that arise during the mlcA-mediated biosynthesis of the nonaketide chain and leads to dihydro-ML-236C carboxylate. Covalently bound dihydro-ML-236C carboxylate is released from mlcA by the mlcF esterase. Conversion of dihydro-ML-236C carboxylate into ML-236A carboxylate is subsequently performed with the participation of molecular oxygen and P450 monoogygenase mlcC. Finally, mlcH performs the conversion of ML-236A carboxylate to ML-236B/compactin carboxylate through the addition of the side-chain diketide moiety produced by the diketide synthase mlcB. HMG-CoA reductase mlcD may act as a down-regulator of compactin production and is involved in conferring resistance to ML-236B/compactin. The protein is 3-hydroxy-3-methylglutaryl coenzyme A reductase mlcD of Penicillium citrinum.